We begin with the raw amino-acid sequence, 158 residues long: MSQLTHFDSAGQAHMVDVGDKAVTHRVAVATGTIRMLPETFALVRDGNAKKGDVLGIARVAAIQGSKRTSDLIPLCHPLALTKVAVEFELNEAGHSVRCTVRAETRGQTGVEMEALTAVQVGLLTIYDMCKAVDRGMVIGDVRLMEKRGGKSGDWVAD.

Residues 75–77 (LCH) and 113–114 (ME) contribute to the substrate site. Residue D128 is part of the active site.

This sequence belongs to the MoaC family. As to quaternary structure, homohexamer; trimer of dimers.

The catalysed reaction is (8S)-3',8-cyclo-7,8-dihydroguanosine 5'-triphosphate = cyclic pyranopterin phosphate + diphosphate. It participates in cofactor biosynthesis; molybdopterin biosynthesis. Catalyzes the conversion of (8S)-3',8-cyclo-7,8-dihydroguanosine 5'-triphosphate to cyclic pyranopterin monophosphate (cPMP). This chain is Cyclic pyranopterin monophosphate synthase, found in Ralstonia pickettii (strain 12J).